The sequence spans 572 residues: Receptor-transporting protein 5 (572 aa).

A 3CxxC-type zinc finger spans residues 52–148 (SRLQCGHCPG…AYEGCCEACE (97 aa)). The chain crosses the membrane as a helical span at residues 544 to 560 (FWIWVSMTVCVFWLMCM).

The protein localises to the membrane. This Homo sapiens (Human) protein is Receptor-transporting protein 5 (RTP5).